The following is a 339-amino-acid chain: Anthranilate phosphoribosyltransferase (339 aa).

5-phospho-alpha-D-ribose 1-diphosphate contacts are provided by residues Gly-79, 82–83 (GD), Thr-87, 89–92 (NVST), 107–115 (KHGNRAVSS), and Ser-119. Gly-79 is an anthranilate binding site. Ser-91 provides a ligand contact to Mg(2+). Asn-110 provides a ligand contact to anthranilate. Arg-165 is an anthranilate binding site. Positions 224 and 225 each coordinate Mg(2+).

The protein belongs to the anthranilate phosphoribosyltransferase family. In terms of assembly, homodimer. Requires Mg(2+) as cofactor.

The enzyme catalyses N-(5-phospho-beta-D-ribosyl)anthranilate + diphosphate = 5-phospho-alpha-D-ribose 1-diphosphate + anthranilate. The protein operates within amino-acid biosynthesis; L-tryptophan biosynthesis; L-tryptophan from chorismate: step 2/5. Catalyzes the transfer of the phosphoribosyl group of 5-phosphorylribose-1-pyrophosphate (PRPP) to anthranilate to yield N-(5'-phosphoribosyl)-anthranilate (PRA). The protein is Anthranilate phosphoribosyltransferase of Geobacillus kaustophilus (strain HTA426).